Consider the following 123-residue polypeptide: uncharacterized protein (123 aa).

The segment at 100–123 (NKQPKTTHHFSTNSSEYKSRKSKH) is disordered.

This is an uncharacterized protein from Acanthamoeba polyphaga mimivirus (APMV).